Reading from the N-terminus, the 443-residue chain is D(2) dopamine receptor (443 aa).

The Extracellular segment spans residues 1-37 (MDPLNLSWYDDDLERQNWSRPFNGSDGKADRPHYNYY). Asn5, Asn17, and Asn23 each carry an N-linked (GlcNAc...) asparagine glycan. The chain crosses the membrane as a helical span at residues 38-60 (ATLLTLLIAVIVFGNVLVCMAVS). Topologically, residues 61 to 70 (REKALQTTTN) are cytoplasmic. Residues 71–93 (YLIVSLAVADLLVATLVMPWVVY) traverse the membrane as a helical segment. Residues 94–108 (LEVVGEWKFSRIHCD) are Extracellular-facing. An intrachain disulfide couples Cys107 to Cys182. The helical transmembrane segment at 109 to 130 (IFVTLDVMMCTASILNLCAISI) threads the bilayer. Residues 131 to 151 (DRYTAVAMPMLYNTRYSSKRR) are Cytoplasmic-facing. The helical transmembrane segment at 152–172 (VTVMISIVWVLSFTISCPLLF) threads the bilayer. At 173–188 (GLNNADQNECIIANPA) the chain is on the extracellular side. A helical membrane pass occupies residues 189-213 (FVVYSSIVSFYVPFIVTLLVYIKIY). Residues 211-373 (KIYIVLRRRR…SQQKEKKATQ (163 aa)) form an interaction with PPP1R9B region. Over 214-373 (IVLRRRRKRV…SQQKEKKATQ (160 aa)) the chain is Cytoplasmic. A disordered region spans residues 281–332 (MEMLSSTSPPERTRYSPIPPSHHQLTLPDPSHHGLHSTPDSPAKPEKNGHAK). A compositionally biased stretch (basic and acidic residues) spans 323–332 (AKPEKNGHAK). The chain crosses the membrane as a helical span at residues 374-395 (MLAIVLGVFIICWLPFFITHIL). The Extracellular portion of the chain corresponds to 396 to 409 (NIHCDCNIPPVLYS). Cys399 and Cys401 are joined by a disulfide. A helical transmembrane segment spans residues 410-431 (AFTWLGYVNSAVNPIIYTTFNI). The Cytoplasmic portion of the chain corresponds to 432 to 443 (EFRKAFLKILHC). Residue Cys443 is the site of S-palmitoyl cysteine attachment.

It belongs to the G-protein coupled receptor 1 family. Forms homo- and heterooligomers with DRD4. The interaction with DRD4 may modulate agonist-induced downstream signaling. Interacts with CADPS and CADPS2. Interacts with GPRASP1, PPP1R9B and CLIC6. Interacts with ARRB2. Interacts with HTR2A. Interacts with GNAI2 isoform sGi2, the interaction allows the creation of an intracellular pool of DRD2 that can be released to cell surface upon agonist stimulation. Interacts with DRD1. Interacts with KCNA2. Post-translationally, palmitoylated. Palmitoylation which is required for proper localization to the plasma membrane and stability of the receptor could be carried on by ZDHHC4, ZDHHC3 and ZDHHC8. Expressed in the anterior pituitary gland.

The protein localises to the cell membrane. Its subcellular location is the golgi apparatus membrane. In terms of biological role, dopamine receptor whose activity is mediated by G proteins which inhibit adenylyl cyclase. Positively regulates postnatal regression of retinal hyaloid vessels via suppression of VEGFR2/KDR activity, downstream of OPN5. The chain is D(2) dopamine receptor (DRD2) from Homo sapiens (Human).